The following is a 1090-amino-acid chain: ATP-dependent helicase/deoxyribonuclease subunit B (1090 aa).

Residue 7 to 14 (GPVGSGKS) participates in ATP binding. [4Fe-4S] cluster is bound by residues cysteine 719, cysteine 1035, cysteine 1038, and cysteine 1044.

Belongs to the helicase family. AddB/RexB type 1 subfamily. In terms of assembly, heterodimer of AddA and AddB. It depends on Mg(2+) as a cofactor. [4Fe-4S] cluster is required as a cofactor.

Its function is as follows. The heterodimer acts as both an ATP-dependent DNA helicase and an ATP-dependent, dual-direction single-stranded exonuclease. Recognizes the chi site generating a DNA molecule suitable for the initiation of homologous recombination. The AddB subunit has 5' -&gt; 3' nuclease activity but not helicase activity. The chain is ATP-dependent helicase/deoxyribonuclease subunit B from Carboxydothermus hydrogenoformans (strain ATCC BAA-161 / DSM 6008 / Z-2901).